The sequence spans 514 residues: ATP synthase subunit alpha (514 aa).

170-177 (GDRQIGKT) lines the ATP pocket.

The protein belongs to the ATPase alpha/beta chains family. F-type ATPases have 2 components, CF(1) - the catalytic core - and CF(0) - the membrane proton channel. CF(1) has five subunits: alpha(3), beta(3), gamma(1), delta(1), epsilon(1). CF(0) has three main subunits: a(1), b(2) and c(9-12). The alpha and beta chains form an alternating ring which encloses part of the gamma chain. CF(1) is attached to CF(0) by a central stalk formed by the gamma and epsilon chains, while a peripheral stalk is formed by the delta and b chains.

It is found in the cell inner membrane. The catalysed reaction is ATP + H2O + 4 H(+)(in) = ADP + phosphate + 5 H(+)(out). Functionally, produces ATP from ADP in the presence of a proton gradient across the membrane. The alpha chain is a regulatory subunit. This is ATP synthase subunit alpha from Pseudomonas putida (strain GB-1).